A 616-amino-acid chain; its full sequence is Chaperone protein HscA (616 aa).

The protein belongs to the heat shock protein 70 family.

Its function is as follows. Chaperone involved in the maturation of iron-sulfur cluster-containing proteins. Has a low intrinsic ATPase activity which is markedly stimulated by HscB. Involved in the maturation of IscU. The polypeptide is Chaperone protein HscA (Escherichia coli O17:K52:H18 (strain UMN026 / ExPEC)).